The chain runs to 187 residues: Dihydrofolate reductase 2, mitochondrial (187 aa).

The region spanning 4–185 (LLNCIVAVSQ…IKYKFEVCEK (182 aa)) is the DHFR domain. Residues Ala10 and 16–22 (GIGKNGD) each bind NADP(+). 31 to 36 (EFRYFQ) is a substrate binding site. 55–57 (RKT) contacts NADP(+). Residue Arg71 coordinates substrate. Residues 77-79 (SRE) and 117-124 (GGSSVYKE) contribute to the NADP(+) site.

It belongs to the dihydrofolate reductase family. In terms of tissue distribution, expressed in numerous cell lines.

It is found in the mitochondrion. It localises to the mitochondrion matrix. The protein localises to the mitochondrion inner membrane. The enzyme catalyses (6S)-5,6,7,8-tetrahydrofolate + NADP(+) = 7,8-dihydrofolate + NADPH + H(+). It participates in cofactor biosynthesis; tetrahydrofolate biosynthesis; 5,6,7,8-tetrahydrofolate from 7,8-dihydrofolate: step 1/1. Its function is as follows. Key enzyme in folate metabolism. Contributes to the de novo mitochondrial thymidylate biosynthesis pathway. Required to prevent uracil accumulation in mtDNA. Binds its own mRNA and that of DHFR. This chain is Dihydrofolate reductase 2, mitochondrial, found in Homo sapiens (Human).